A 241-amino-acid polypeptide reads, in one-letter code: Large ribosomal subunit protein uL3 (241 aa).

Belongs to the universal ribosomal protein uL3 family. As to quaternary structure, part of the 50S ribosomal subunit. Forms a cluster with proteins L14 and L19.

In terms of biological role, one of the primary rRNA binding proteins, it binds directly near the 3'-end of the 23S rRNA, where it nucleates assembly of the 50S subunit. The chain is Large ribosomal subunit protein uL3 from Aquifex aeolicus (strain VF5).